A 125-amino-acid polypeptide reads, in one-letter code: Histone H2B type 1 (125 aa).

The segment at 1-36 is disordered; the sequence is MPEPAKSRPAPKKGSKKAVTKAQKKDGKERKRSRKE. Position 2 is an N-acetylproline (Pro2). Glu3 carries the post-translational modification ADP-ribosyl glutamic acid. Lys6 carries the post-translational modification N6-(2-hydroxyisobutyryl)lysine; alternate. Lys6 bears the N6-(beta-hydroxybutyryl)lysine; alternate mark. Position 6 is an N6-acetyllysine; alternate (Lys6). At Lys6 the chain carries N6-butyryllysine; alternate. Lys6 is subject to N6-crotonyllysine; alternate. Lys6 carries the N6-lactoyllysine; alternate modification. A Glycyl lysine isopeptide (Lys-Gly) (interchain with G-Cter in SUMO2); alternate cross-link involves residue Lys6. Ser7 bears the ADP-ribosylserine mark. The segment covering 9-19 has biased composition (basic residues); sequence PAPKKGSKKAV. Lys12 is subject to N6-(beta-hydroxybutyryl)lysine; alternate. Residues Lys12 and Lys13 each carry the N6-acetyllysine; alternate modification. Lys12 and Lys13 each carry N6-crotonyllysine; alternate. Residue Lys12 is modified to N6-lactoyllysine; alternate. Position 13 is an N6-(2-hydroxyisobutyryl)lysine; alternate (Lys13). At Ser15 the chain carries Phosphoserine; by STK4/MST1. Residues Lys16, Lys17, Lys21, and Lys24 each carry the N6-acetyllysine; alternate modification. An N6-crotonyllysine; alternate mark is found at Lys16, Lys17, Lys21, and Lys24. N6-lactoyllysine; alternate occurs at positions 16, 17, 21, and 24. Lys17 is modified (N6-glutaryllysine; alternate). N6-(2-hydroxyisobutyryl)lysine; alternate occurs at positions 21 and 24. N6-(beta-hydroxybutyryl)lysine; alternate is present on Lys21. Lys21 bears the N6-butyryllysine; alternate mark. Residue Lys21 forms a Glycyl lysine isopeptide (Lys-Gly) (interchain with G-Cter in SUMO2); alternate linkage. Lys25 is modified (N6-(2-hydroxyisobutyryl)lysine). At Lys35 the chain carries N6-(2-hydroxyisobutyryl)lysine; alternate. Residue Lys35 is modified to N6-(beta-hydroxybutyryl)lysine; alternate. Lys35 carries the N6-crotonyllysine; alternate modification. Lys35 is subject to N6-glutaryllysine; alternate. Lys35 is modified (N6-succinyllysine; alternate). Lys35 is covalently cross-linked (Glycyl lysine isopeptide (Lys-Gly) (interchain with G-Cter in ubiquitin); alternate). A PolyADP-ribosyl glutamic acid modification is found at Glu36. Ser37 carries the phosphoserine; by AMPK modification. Lys44, Lys47, and Lys58 each carry N6-(2-hydroxyisobutyryl)lysine; alternate. At Lys44 the chain carries N6-lactoyllysine; alternate. An N6-glutaryllysine; alternate mark is found at Lys44 and Lys47. Lys47 bears the N6-methyllysine; alternate mark. Lys58 bears the N6,N6-dimethyllysine; alternate mark. Residue Arg79 is modified to Dimethylated arginine. Lys85 carries the N6-(2-hydroxyisobutyryl)lysine; alternate modification. At Lys85 the chain carries N6-acetyllysine; alternate. N6-lactoyllysine; alternate is present on Lys85. Lys85 bears the N6,N6,N6-trimethyllysine; alternate mark. An omega-N-methylarginine mark is found at Arg86 and Arg92. Lys108 bears the N6-(2-hydroxyisobutyryl)lysine; alternate mark. An N6-lactoyllysine; alternate modification is found at Lys108. An N6-glutaryllysine; alternate modification is found at Lys108. Residue Lys108 is modified to N6-methyllysine; alternate. Ser112 carries O-linked (GlcNAc) serine glycosylation. At Thr115 the chain carries Phosphothreonine. An N6-(2-hydroxyisobutyryl)lysine; alternate mark is found at Lys116 and Lys120. Lys116 is subject to N6-(beta-hydroxybutyryl)lysine; alternate. 2 positions are modified to N6-lactoyllysine; alternate: Lys116 and Lys120. An N6-glutaryllysine; alternate mark is found at Lys116 and Lys120. N6-succinyllysine; alternate is present on residues Lys116 and Lys120. Residue Lys116 is modified to N6-methylated lysine; alternate. Lys120 participates in a covalent cross-link: Glycyl lysine isopeptide (Lys-Gly) (interchain with G-Cter in ubiquitin); alternate.

This sequence belongs to the histone H2B family. In terms of assembly, the nucleosome is a histone octamer containing two molecules each of H2A, H2B, H3 and H4 assembled in one H3-H4 heterotetramer and two H2A-H2B heterodimers. The octamer wraps approximately 147 bp of DNA. In terms of processing, monoubiquitination at Lys-35 (H2BK34Ub) by the MSL1/MSL2 dimer is required for histone H3 'Lys-4' (H3K4me) and 'Lys-79' (H3K79me) methylation and transcription activation at specific gene loci, such as HOXA9 and MEIS1 loci. Similarly, monoubiquitination at Lys-120 (H2BK120Ub) by the RNF20/40 complex gives a specific tag for epigenetic transcriptional activation and is also prerequisite for histone H3 'Lys-4' and 'Lys-79' methylation. It also functions cooperatively with the FACT dimer to stimulate elongation by RNA polymerase II. H2BK120Ub also acts as a regulator of mRNA splicing: deubiquitination by USP49 is required for efficient cotranscriptional splicing of a large set of exons. Post-translationally, phosphorylated on Ser-15 (H2BS14ph) by STK4/MST1 during apoptosis; which facilitates apoptotic chromatin condensation. Also phosphorylated on Ser-15 in response to DNA double strand breaks (DSBs), and in correlation with somatic hypermutation and immunoglobulin class-switch recombination. Phosphorylation at Ser-37 (H2BS36ph) by AMPK in response to stress promotes transcription. ADP-ribosylated by PARP1 or PARP2 on Ser-7 (H2BS6ADPr) in response to DNA damage. H2BS6ADPr promotes recruitment of CHD1L. Mono-ADP-ribosylated on Glu-3 (H2BE2ADPr) by PARP3 in response to single-strand breaks. Poly ADP-ribosylation on Glu-36 (H2BE35ADPr) by PARP1 regulates adipogenesis: it inhibits phosphorylation at Ser-37 (H2BS36ph), thereby blocking expression of pro-adipogenetic genes. In terms of processing, crotonylation (Kcr) is specifically present in male germ cells and marks testis-specific genes in post-meiotic cells, including X-linked genes that escape sex chromosome inactivation in haploid cells. Crotonylation marks active promoters and enhancers and confers resistance to transcriptional repressors. It is also associated with post-meiotically activated genes on autosomes. Post-translationally, glcNAcylation at Ser-112 promotes monoubiquitination of Lys-120. It fluctuates in response to extracellular glucose, and associates with transcribed genes. Lactylated in macrophages by EP300/P300 by using lactoyl-CoA directly derived from endogenous or exogenous lactate, leading to stimulates gene transcription.

The protein localises to the nucleus. The protein resides in the chromosome. Core component of nucleosome. Nucleosomes wrap and compact DNA into chromatin, limiting DNA accessibility to the cellular machineries which require DNA as a template. Histones thereby play a central role in transcription regulation, DNA repair, DNA replication and chromosomal stability. DNA accessibility is regulated via a complex set of post-translational modifications of histones, also called histone code, and nucleosome remodeling. Its function is as follows. Has broad antibacterial activity. May contribute to the formation of the functional antimicrobial barrier of the colonic epithelium, and to the bactericidal activity of amniotic fluid. The sequence is that of Histone H2B type 1 from Rattus norvegicus (Rat).